The following is a 480-amino-acid chain: Pre-glycoprotein polyprotein GP complex (480 aa).

G2 carries the N-myristoyl glycine; by host lipid modification. Residues 2-17 (GQLVSFFQEIPVFFQE) are Extracellular-facing. A helical membrane pass occupies residues 18 to 33 (ALNIALAVVTLLAIVK). At 34–58 (GVLNLWKSGLFQLLMFLILAGRSCS) the chain is on the cytoplasmic side. A Zn(2+)-binding site is contributed by C57. The Extracellular portion of the chain corresponds to 59–419 (FRIGYHTSFE…QGRTPLTLVD (361 aa)). 4 cysteine pairs are disulfide-bonded: C85–C221, C266–C279, C288–C297, and C351–C372. Residues N88, N174, and N214 are each glycosylated (N-linked (GlcNAc...) asparagine; by host). N-linked (GlcNAc...) asparagine; by host glycans are attached at residues N352, N360, N377, and N382. Residues 420–440 (LCFWSAVFYTTTLFLHLVGFP) traverse the membrane as a helical segment. Residues 441-480 (THRHISGEPCPLPHRLNRHGACNCGRFKRLKKPLVWYKHH) are Cytoplasmic-facing. Zn(2+) is bound by residues H442, H444, C450, H454, C462, C464, and H480.

This sequence belongs to the arenaviridae GPC protein family. As to quaternary structure, interacts with glycoprotein G2. Part of the GP complex (GP-C) together with glycoprotein G1 and glycoprotein G2. The GP-complex interacts with protein Z, which interacts with ribonucleocapsid; these interactions may induce virion budding. In terms of assembly, homotrimer; disulfide-linked. In pre-fusion state, G1 homotrimers bind G2 homotrimers via ionic interactions. Part of the GP complex (GP-C) together with glycoprotein G2 and the stable signal peptide. The GP-complex interacts with protein Z, which interacts with ribonucleocapsid; these interactions may induce virion budding. Homotrimer. Interacts with the stable signal peptide. In pre-fusion state, G2 homotrimers bind G1 homotrimers via ionic interactions. Part of the GP complex (GP-C) together with glycoprotein G1 and the stable signal peptide. Acidification in the endosome triggers rearrangements, which ultimately leads to a 6 helix bundle formed by the two heptad repeat domains (HR1 and HR2) in post-fusion state. The GP-complex interacts with protein Z, which interacts with ribonucleocapsid; these interactions may induce virion budding. Specific enzymatic cleavages in vivo yield mature proteins. GP-C polyprotein is cleaved in the endoplasmic reticulum by the host protease MBTPS1. Only cleaved glycoprotein is incorporated into virions. Post-translationally, the SSP remains stably associated with the GP complex following cleavage by signal peptidase and plays crucial roles in the trafficking of GP through the secretory pathway. In terms of processing, myristoylation is necessary for GP2-mediated fusion activity.

It localises to the virion membrane. The protein resides in the host endoplasmic reticulum membrane. The protein localises to the host Golgi apparatus membrane. Its subcellular location is the host cell membrane. In terms of biological role, functions as a cleaved signal peptide that is retained as the third component of the GP complex (GP-C). Helps to stabilize the spike complex in its native conformation. The SSP is required for efficient glycoprotein expression, post-translational maturation cleavage of G1 and G2, glycoprotein transport to the cell surface plasma membrane, formation of infectious virus particles, and acid pH-dependent glycoprotein-mediated cell fusion. Functionally, forms the virion spikes together with glycoprotein G2. The glycoprotein spike trimers are connected to the underlying matrix. Interacts with the host receptor leading to virus endocytosis. Its function is as follows. Forms the virion spikes together with glycoprotein G1. The glycoprotein spike trimers are connected to the underlying matrix. Class I viral fusion protein that directs fusion of viral and host endosomal membranes, leading to delivery of the nucleocapsid into the cytoplasm. Membrane fusion is mediated by irreversible conformational changes induced by acidification. The polypeptide is Pre-glycoprotein polyprotein GP complex (Cupixi mammarenavirus (isolate Rat/Brasil/BeAn 119303/1970) (CPXV)).